The following is a 307-amino-acid chain: Aspartate carbamoyltransferase catalytic subunit (307 aa).

Residues Arg54 and Thr55 each coordinate carbamoyl phosphate. Lys83 is a binding site for L-aspartate. Carbamoyl phosphate contacts are provided by Arg104, His132, and Gln135. Arg165 and Arg228 together coordinate L-aspartate. Positions 267 and 268 each coordinate carbamoyl phosphate.

This sequence belongs to the aspartate/ornithine carbamoyltransferase superfamily. ATCase family. Heterododecamer (2C3:3R2) of six catalytic PyrB chains organized as two trimers (C3), and six regulatory PyrI chains organized as three dimers (R2).

It carries out the reaction carbamoyl phosphate + L-aspartate = N-carbamoyl-L-aspartate + phosphate + H(+). It participates in pyrimidine metabolism; UMP biosynthesis via de novo pathway; (S)-dihydroorotate from bicarbonate: step 2/3. Its function is as follows. Catalyzes the condensation of carbamoyl phosphate and aspartate to form carbamoyl aspartate and inorganic phosphate, the committed step in the de novo pyrimidine nucleotide biosynthesis pathway. The sequence is that of Aspartate carbamoyltransferase catalytic subunit from Clostridium botulinum (strain Loch Maree / Type A3).